The primary structure comprises 586 residues: Eukaryotic translation initiation factor 3 subunit D (586 aa).

Positions 102-176 are disordered; that stretch reads SAKRTFGRGG…DKPQRTREPS (75 aa). The segment covering 162 to 174 has biased composition (basic and acidic residues); sequence GWKDYDKPQRTRE. Residues 301–315 are RNA gate; sequence SLDLVTVNENAADAP. Positions 567-586 are disordered; sequence EEEEEVAAEEQEAAEEEAEE.

This sequence belongs to the eIF-3 subunit D family. Component of the eukaryotic translation initiation factor 3 (eIF-3) complex.

It is found in the cytoplasm. MRNA cap-binding component of the eukaryotic translation initiation factor 3 (eIF-3) complex, which is involved in protein synthesis of a specialized repertoire of mRNAs and, together with other initiation factors, stimulates binding of mRNA and methionyl-tRNAi to the 40S ribosome. The eIF-3 complex specifically targets and initiates translation of a subset of mRNAs involved in cell proliferation. In the eIF-3 complex, eif3d specifically recognizes and binds the 7-methylguanosine cap of a subset of mRNAs. The protein is Eukaryotic translation initiation factor 3 subunit D of Aspergillus niger (strain ATCC MYA-4892 / CBS 513.88 / FGSC A1513).